The chain runs to 706 residues: Elongation factor G (706 aa).

The region spanning 8–290 (KRYRNIGIVA…GVIEYMPSPT (283 aa)) is the tr-type G domain. GTP is bound by residues 17-24 (AHVDAGKT), 88-92 (DTPGH), and 142-145 (NKMD).

The protein belongs to the TRAFAC class translation factor GTPase superfamily. Classic translation factor GTPase family. EF-G/EF-2 subfamily.

It localises to the cytoplasm. In terms of biological role, catalyzes the GTP-dependent ribosomal translocation step during translation elongation. During this step, the ribosome changes from the pre-translocational (PRE) to the post-translocational (POST) state as the newly formed A-site-bound peptidyl-tRNA and P-site-bound deacylated tRNA move to the P and E sites, respectively. Catalyzes the coordinated movement of the two tRNA molecules, the mRNA and conformational changes in the ribosome. This chain is Elongation factor G, found in Chromohalobacter salexigens (strain ATCC BAA-138 / DSM 3043 / CIP 106854 / NCIMB 13768 / 1H11).